Reading from the N-terminus, the 184-residue chain is Ras-related protein Rap-1b (184 aa).

10 to 18 (GSGGVGKSA) provides a ligand contact to GTP. The tract at residues 25 to 67 (QGIFVEKYDPTIEDSYRKQVEVDAQQCMLEILDTAGTEQFTAM) is interaction with KRIT1. The short motif at 32 to 40 (YDPTIEDSY) is the Effector region element. At S39 the chain carries ADP-ribosylserine; by botulinum toxin. Residues 57–61 (DTAGT), 116–119 (NKCD), and 147–149 (SAK) contribute to the GTP site. S179 is modified (phosphoserine; by PKA). A Cysteine methyl ester modification is found at C181. Residue C181 is the site of S-geranylgeranyl cysteine attachment. A propeptide spans 182 to 184 (QLL) (removed in mature form).

This sequence belongs to the small GTPase superfamily. Ras family. In terms of assembly, heterodimer with RAP1GAP. Interacts with EPAC2. Interacts with SGSM1. Interacts with SGSM2. Interacts with SGSM3. Interacts with KRIT1. Interacts with RAP1GDS1.

The protein localises to the cell membrane. The protein resides in the cytoplasm. Its subcellular location is the cytosol. It is found in the cell junction. The catalysed reaction is GTP + H2O = GDP + phosphate + H(+). Activated by guanine nucleotide-exchange factor (GEF) EPAC2 in a cAMP-dependent manner. Its function is as follows. GTP-binding protein that possesses intrinsic GTPase activity. Contributes to the polarizing activity of KRIT1 and CDH5 in the establishment and maintenance of correct endothelial cell polarity and vascular lumen. Required for the localization of phosphorylated PRKCZ, PARD3 and TIAM1 to the cell junction. Plays a role in the establishment of basal endothelial barrier function. The chain is Ras-related protein Rap-1b (Rap1b) from Rattus norvegicus (Rat).